The chain runs to 282 residues: DegV domain-containing protein M6_Spy0690 (282 aa).

Residues 3-280 (LAVITDSTAT…EGAIAFGVTP (278 aa)) form the DegV domain. The hexadecanoate site is built by Thr61 and Ser94.

Functionally, may bind long-chain fatty acids, such as palmitate, and may play a role in lipid transport or fatty acid metabolism. This is DegV domain-containing protein M6_Spy0690 from Streptococcus pyogenes serotype M6 (strain ATCC BAA-946 / MGAS10394).